The sequence spans 305 residues: Coiled-coil domain-containing protein 83 (305 aa).

Residues 1-25 (MDSSAKGSKKDAPDGPPKDSKLPVS) are disordered. A compositionally biased stretch (basic and acidic residues) spans 8-21 (SKKDAPDGPPKDSK). Positions 37-186 (ENAVERFMFH…LEDEKKRISR (150 aa)) form a coiled coil.

The protein is Coiled-coil domain-containing protein 83 (Ccdc83) of Mus musculus (Mouse).